A 413-amino-acid chain; its full sequence is Gamma-glutamyl phosphate reductase (413 aa).

Belongs to the gamma-glutamyl phosphate reductase family.

It is found in the cytoplasm. The enzyme catalyses L-glutamate 5-semialdehyde + phosphate + NADP(+) = L-glutamyl 5-phosphate + NADPH + H(+). The protein operates within amino-acid biosynthesis; L-proline biosynthesis; L-glutamate 5-semialdehyde from L-glutamate: step 2/2. Functionally, catalyzes the NADPH-dependent reduction of L-glutamate 5-phosphate into L-glutamate 5-semialdehyde and phosphate. The product spontaneously undergoes cyclization to form 1-pyrroline-5-carboxylate. In Caulobacter vibrioides (strain ATCC 19089 / CIP 103742 / CB 15) (Caulobacter crescentus), this protein is Gamma-glutamyl phosphate reductase.